The following is a 138-amino-acid chain: MAKPIPKIGSRKNARSGSRKHLRKIPKGIIHVQASFNNTIVTVTDVRGRVISWSSAGTCGFKGTRRGTPFAAQTAAGNAIRTVADQGMQRAEVMIKGPGLGRDAALRAIRRSGILLNFIRDVTPMPHNGCRSPKKRRV.

Residues 1–22 (MAKPIPKIGSRKNARSGSRKHL) are disordered. Basic residues predominate over residues 9–22 (GSRKNARSGSRKHL).

This sequence belongs to the universal ribosomal protein uS11 family. As to quaternary structure, part of the 30S ribosomal subunit.

It is found in the plastid. Its subcellular location is the chloroplast. This chain is Small ribosomal subunit protein uS11c, found in Lotus japonicus (Lotus corniculatus var. japonicus).